A 125-amino-acid polypeptide reads, in one-letter code: UPF0389 protein CG9231 (125 aa).

The helical transmembrane segment at 69 to 88 (IRLANIMIALTAVGCAIMVY) threads the bilayer. N-linked (GlcNAc...) asparagine glycosylation is present at N112.

It belongs to the UPF0389 family.

It is found in the membrane. The chain is UPF0389 protein CG9231 from Drosophila melanogaster (Fruit fly).